An 878-amino-acid chain; its full sequence is Probable di- and tripeptidase DUG2 (878 aa).

WD repeat units lie at residues N18 to T57, H68 to D107, R235 to T274, D282 to T322, and P362 to P405. Residue H520 coordinates Zn(2+). The active site involves D522. D553 lines the Zn(2+) pocket. E586 functions as the Proton acceptor in the catalytic mechanism. E587 provides a ligand contact to Zn(2+). The stretch at I608 to L651 is one WD 6 repeat. H853 contacts Zn(2+).

Belongs to the peptidase M20A family. In terms of assembly, component of the GSH degradosomal complex composed of at least DUG1, DUG2 and DUG3. The cofactor is Zn(2+).

The protein localises to the cytoplasm. It is found in the nucleus. Functionally, component of the GSH degradosomal complex involved in the degradation of glutathione (GSH) and other peptides containing a gamma-glu-X bond. This chain is Probable di- and tripeptidase DUG2 (DUG2), found in Saccharomyces cerevisiae (strain ATCC 204508 / S288c) (Baker's yeast).